The sequence spans 758 residues: MAAPTPSNRIEERSGHASCVRADADLPPVAILGRSPITLRHKIFFVAVAVIGALAWTVVAFFRNEPVNAVWIVVAAGCTYIIGFRFYARLIEMKVVRPRDDHATPAEILDDGTDYVPTDRRVVFGHHFAAIAGAGPLVGPVLATQMGYLPSSIWIVVGAVLAGCVQDYLVLWISVRRRGRSLGQMVRDELGATAGVAALVGIPVIITIVIAVLALVVVRALAKSPWGVFSIAMTIPIAIFMGCYLRFLRPGRVSEVSLIGIGLLLLAVVSGDWVAHTSWGAAWFSLSPVTLCWLLISYGFAASVLPVWLLLAPRDYLSTFMKVGTIALLAIGVCAAHPIIEAPAVSKFAGSGNGPVFAGSLFPFLFITIACGALSGFHALICSGTTPKMLEKEGQMRVIGYGGMMTESFVAVIALLTAAILDQHLYFTLNAPSLHTHDSAATAAKYVNGLGLTGSPVTPDHISQAAASVGEQTIVSRTGGAPTLAFGMAEMLHRVVGGVGLKAFWYHFAIMFEALFILTTVDAGTRAARFMISDALGNFGGVLRKLQNPSWRPGAWACRLVVVAAWGSILLLGVTDPLGGINTLFPLFGIANQLLAGIALTVITVVVIKKGRLKWAWIPGIPLLWDLAVTLTASWQKIFSADPSVGYWTQHAHYAAAQHAGETAFGSATNADEINDVVRNTFVQGTLSIVFVVVVVLVVVAGVIVALKTIRGRGIPLAEDDPAPSTLFAPAGLIPTAAERKLQRRLGAPASASVAAPD.

The next 16 helical transmembrane spans lie at 42-62 (KIFFVAVAVIGALAWTVVAFF), 67-87 (VNAVWIVVAAGCTYIIGFRFY), 122-142 (VVFGHHFAAIAGAGPLVGPVL), 153-173 (IWIVVGAVLAGCVQDYLVLWI), 198-218 (ALVGIPVIITIVIAVLALVVV), 225-245 (PWGVFSIAMTIPIAIFMGCYL), 256-276 (VSLIGIGLLLLAVVSGDWVAH), 291-311 (LCWLLISYGFAASVLPVWLLL), 320-340 (FMKVGTIALLAIGVCAAHPII), 361-381 (LFPFLFITIACGALSGFHALI), 401-421 (YGGMMTESFVAVIALLTAAIL), 498-518 (GVGLKAFWYHFAIMFEALFIL), 561-581 (VVVAAWGSILLLGVTDPLGGI), 588-608 (FGIANQLLAGIALTVITVVVI), 615-635 (WAWIPGIPLLWDLAVTLTASW), and 687-707 (LSIVFVVVVVLVVVAGVIVAL).

Belongs to the peptide transporter carbon starvation (CstA) (TC 2.A.114) family.

The protein resides in the cell membrane. In terms of biological role, involved in peptide utilization. The chain is Peptide transporter CstA (cstA) from Mycobacterium tuberculosis (strain ATCC 25618 / H37Rv).